The chain runs to 323 residues: AA9 family lytic polysaccharide monooxygenase A (323 aa).

The first 19 residues, 1–19, serve as a signal peptide directing secretion; the sequence is MKSFISLLGLSFLTCHASA. Positions 20 and 90 each coordinate Cu(2+). A disulfide bond links Cys-59 and Cys-175. O2 contacts are provided by His-161 and Gln-170. Tyr-172 provides a ligand contact to Cu(2+). A glycan (N-linked (GlcNAc...) asparagine) is linked at Asn-215. In terms of domain architecture, CBM1 spans 287 to 323; it reads AVVQKFGQCGGQGWTGGTTCVAGSTCTATNAYYSQCL.

It belongs to the polysaccharide monooxygenase AA9 family. The cofactor is Cu(2+).

It localises to the secreted. The enzyme catalyses [(1-&gt;4)-beta-D-glucosyl]n+m + reduced acceptor + O2 = 4-dehydro-beta-D-glucosyl-[(1-&gt;4)-beta-D-glucosyl]n-1 + [(1-&gt;4)-beta-D-glucosyl]m + acceptor + H2O.. Its function is as follows. Lytic polysaccharide monooxygenase (LPMO) that depolymerizes crystalline and amorphous polysaccharides via the oxidation of scissile alpha- or beta-(1-4)-glycosidic bonds, yielding C1 and C4 oxidation products. Catalysis by LPMOs requires the reduction of the active-site copper from Cu(II) to Cu(I) by a reducing agent and H(2)O(2) or O(2) as a cosubstrate. This chain is AA9 family lytic polysaccharide monooxygenase A, found in Botryotinia fuckeliana (strain B05.10) (Noble rot fungus).